The sequence spans 305 residues: MAGLKVEWNDWCPGCGNFGILSAEQQAIQELGLDPKKVVLVSGIGCSGKIPHFIRLPASGVHTLHGRALTFAIGIKLANPSLEVIVNGGDGDQLGIGVGHFVSAGRRNVDLTVIVHNNGVYGLTKGQASPTLKLGVKTKSLPKPNINSDINPIALAISSGYTFVARGYAYDVKHLKEIIKKAIKHKGLAMIDVLQPCPTYNDIHTKEYYDKRVYKLDEDPSWDPIVKKPEEMDDKMSKAILKSMEWGDRTPIGIFYQNELVSTYEQRIAERSPSYLDNPPAHDVIEFEGKPTTDVEDILKERRVT.

[4Fe-4S] cluster contacts are provided by C12, C15, and C46. Thiamine diphosphate contacts are provided by residues 44-47 (IGCS) and H65. D90 is a Mg(2+) binding site. 91 to 92 (GD) provides a ligand contact to thiamine diphosphate. The Mg(2+) site is built by N118 and V120. Residue 122-123 (GL) participates in thiamine diphosphate binding. C197 contributes to the [4Fe-4S] cluster binding site.

As to quaternary structure, heterodimer composed of an alpha and a beta subunit. [4Fe-4S] cluster is required as a cofactor. It depends on thiamine diphosphate as a cofactor. Requires Mg(2+) as cofactor.

The enzyme catalyses a 2-oxocarboxylate + 2 oxidized [2Fe-2S]-[ferredoxin] + CoA = an acyl-CoA + 2 reduced [2Fe-2S]-[ferredoxin] + CO2 + H(+). In terms of biological role, catalyzes the coenzyme A-dependent oxidative decarboxylation of different 2-oxoacids such as 2-oxoglutarate, pyruvate and 2-oxobutyrate to form their CoA derivatives. This Saccharolobus solfataricus (Sulfolobus solfataricus) protein is 2-oxoacid:ferredoxin oxidoreductase subunit beta.